Consider the following 190-residue polypeptide: Ras-related protein RabF1 (190 aa).

Position 15–22 (15–22 (GDSGVGKT)) interacts with GTP. An Effector region motif is present at residues 37–44 (HITIGIEF). GTP contacts are provided by residues 62–66 (DTAGE) and 119–122 (NKND). Cys187 carries the post-translational modification Cysteine methyl ester. Residue Cys187 is the site of S-geranylgeranyl cysteine attachment. Positions 188 to 190 (IIN) are cleaved as a propeptide — removed in mature form.

Belongs to the small GTPase superfamily. Rab family.

It localises to the cell membrane. This is Ras-related protein RabF1 (rabF1-1) from Dictyostelium discoideum (Social amoeba).